A 434-amino-acid polypeptide reads, in one-letter code: Protein maelstrom homolog (434 aa).

A DNA-binding region (HMG box) is located at residues 4 to 73 (RKASRNAYYF…AQGKDSGPSE (70 aa)). Disordered regions lie at residues 62-94 (RAAQ…KQNV) and 357-385 (SHFN…SGQN). Residues 357-371 (SHFNSANQEQRSNTP) show a composition bias toward polar residues.

It belongs to the maelstrom family. In terms of assembly, interacts with SMARCB1, SIN3B and DDX4. Interacts with piRNA-associated proteins TDRD1, PIWIL1 and PIWIL2. Interacts with TEX19.

The protein resides in the cytoplasm. The protein localises to the nucleus. Its function is as follows. Plays a central role during spermatogenesis by repressing transposable elements and preventing their mobilization, which is essential for the germline integrity. Acts via the piRNA metabolic process, which mediates the repression of transposable elements during meiosis by forming complexes composed of piRNAs and Piwi proteins and governs the methylation and subsequent repression of transposons. Its association with piP-bodies suggests a participation in the secondary piRNAs metabolic process. Required for the localization of germ-cell factors to the meiotic nuage. This is Protein maelstrom homolog (MAEL) from Macaca fascicularis (Crab-eating macaque).